The chain runs to 895 residues: Serine-rich coiled-coil domain-containing protein 1 (895 aa).

4 disordered regions span residues 1–142, 154–177, 332–394, and 459–497; these read MGDS…KEPS, SGRS…KQST, ELHS…RTLG, and RSSS…SSKM. The segment covering 43–56 has biased composition (low complexity); that stretch reads SSSPSSTNSSSGST. The segment covering 83–102 has biased composition (polar residues); that stretch reads TEQNLSISNGAQPSHSNMQK. Over residues 131 to 142 the composition is skewed to basic and acidic residues; that stretch reads LTEDFEREKEPS. Residues 348-358 are compositionally biased toward polar residues; it reads SLQSTELSVGN. Residues 675–705 adopt a coiled-coil conformation; it reads MLRLQLKDRDELISQLQAELEKVQHLQKAFA. The disordered stretch occupies residues 731–753; the sequence is QGGRETTHRNRTMSQSHSTRDRK.

It belongs to the CCSER family.

The sequence is that of Serine-rich coiled-coil domain-containing protein 1 (Ccser1) from Mus musculus (Mouse).